Consider the following 485-residue polypeptide: Aspartyl/glutamyl-tRNA(Asn/Gln) amidotransferase subunit B (485 aa).

Belongs to the GatB/GatE family. GatB subfamily. In terms of assembly, heterotrimer of A, B and C subunits.

It carries out the reaction L-glutamyl-tRNA(Gln) + L-glutamine + ATP + H2O = L-glutaminyl-tRNA(Gln) + L-glutamate + ADP + phosphate + H(+). The enzyme catalyses L-aspartyl-tRNA(Asn) + L-glutamine + ATP + H2O = L-asparaginyl-tRNA(Asn) + L-glutamate + ADP + phosphate + 2 H(+). Allows the formation of correctly charged Asn-tRNA(Asn) or Gln-tRNA(Gln) through the transamidation of misacylated Asp-tRNA(Asn) or Glu-tRNA(Gln) in organisms which lack either or both of asparaginyl-tRNA or glutaminyl-tRNA synthetases. The reaction takes place in the presence of glutamine and ATP through an activated phospho-Asp-tRNA(Asn) or phospho-Glu-tRNA(Gln). This chain is Aspartyl/glutamyl-tRNA(Asn/Gln) amidotransferase subunit B, found in Gluconobacter oxydans (strain 621H) (Gluconobacter suboxydans).